The sequence spans 719 residues: Fusicoccadiene synthase (719 aa).

Residues 1 to 334 (MEFKYSEVVE…RYNPDVSFNK (334 aa)) form a fusicocca-2,10(14)-diene synthase region. Mg(2+) is bound by residues Asp-92 and Asp-96. The interval 335–719 (TQLEWMRQGL…MRLLLELLRV (385 aa)) is geranylgeranyl diphosphate synthase. The disordered stretch occupies residues 358 to 404 (EIDSDESAVSPTADESDSTEDSLGSGSRQDSSLSTGLSLSPVHSNEG). Residues 378-400 (DSLGSGSRQDSSLSTGLSLSPVH) show a composition bias toward polar residues. Isopentenyl diphosphate contacts are provided by Lys-435, Arg-438, and His-467. Residues Asp-474 and Asp-478 each coordinate Mg(2+). Arg-483 provides a ligand contact to dimethylallyl diphosphate. Isopentenyl diphosphate is bound at residue Arg-484. 6 residues coordinate dimethylallyl diphosphate: Lys-561, Thr-562, Gln-602, Asn-609, Lys-619, and Lys-629.

In the N-terminal section; belongs to the terpene synthase family. This sequence in the C-terminal section; belongs to the FPP/GGPP synthase family. Hexamer.

It carries out the reaction geranylgeranyl diphosphate = fusicocca-2,10(14)-diene + diphosphate. The catalysed reaction is isopentenyl diphosphate + (2E,6E)-farnesyl diphosphate = (2E,6E,10E)-geranylgeranyl diphosphate + diphosphate. The protein operates within mycotoxin biosynthesis. Its function is as follows. Multifunctional diterpene synthase; part of the 2 gene clusters that mediate the biosynthesis of fusicoccins, diterpene glucosides that display phytohormone-like activity and function as potent activators of plasma membrane H(+)-ATPases in plants by modifying 14-3-3 proteins and cause the plant disease constriction canker. The first step in the pathway is performed by the fusicoccadiene synthase PaFS that possesses both prenyl transferase and terpene cyclase activity, converting isopentenyl diphosphate and dimethylallyl diphosphate into geranylgeranyl diphosphate (GGDP) and successively converting GGDP into fusicocca-2,10(14)-diene, a precursor for fusicoccin H. Fusicoccadiene synthase is an allosteric enzyme for GGPP cyclization that generates 64% fusicoccadiene, 9% delta-araneosene, and one additional unidentified diterpene product, when incubated with GGPP. In the absence of isopentenyl diphosphate (IPP), PaFS can also solvolyze the shorter chain geranyl diphosphate (GPP) and farnesyl diphosphate (FPP) as alternative substrates to yield predominantly acyclic products. FPP is converted to farnesol (60.5%), nerolidol (14.0%), and farnesene (14.0%), while GPP is converted to a mixture of geraniol (59.5%) and linalool (35.0%). The second step is the oxidation at the C-8 position by the cytochrome P450 monooxygenase PaP450-2 to yield fusicocca-2,10(14)-diene-8-beta-ol. The cytochrome P450 monooxygenase PaP450-1 then catalyzes the hydroxylation at the C-16 position to produce fusicocca-2,10(14)-diene-8-beta,16-diol. The dioxygenase fc-dox then catalyzes the 16-oxydation of fusicocca-2,10(14)-diene-8-beta,16-diol to yield an aldehyde (8-beta-hydroxyfusicocca-1,10(14)-dien-16-al). The short-chain dehydrogenase/reductase fc-sdr catalyzes the reduction of the aldehyde to yield fusicocca-1,10(14)-diene-8-beta,16-diol. The next step is the hydroxylation at C-9 performed by the cytochrome P450 monooxygenase PaP450-3 that leads to fusicoccin H aglycon which is glycosylated to fusicoccin H by the O-glycosyltransferase PAGT. Hydroxylation at C-12 by the cytochrome P450 monooxygenase PaP450-4 leads then to the production of fusicoccin Q and is followed by methylation by the O-methyltransferase PAMT to yield fusicoccin P. Fusicoccin P is further converted to fusicoccin J via prenylation by the O-glucose prenyltransferase PaPT. Cytochrome P450 monooxygenase PaP450-5 then performs hydroxylation at C-19 to yield dideacetyl-fusicoccin A which is acetylated to 3'-O-deacetyl-fusicoccin A by the O-acetyltransferase PaAT-2. Finally, a another acetylation by the O-acetyltransferase PaAT-1 yields fusicoccin A. The protein is Fusicoccadiene synthase of Phomopsis amygdali (Fusicoccum amygdali).